Consider the following 153-residue polypeptide: T cell receptor delta constant (153 aa).

N14 is a glycosylation site (N-linked (GlcNAc...) asparagine). A disulfide bridge connects residues C20 and C71. N77 carries an N-linked (GlcNAc...) asparagine glycan. The span at 85 to 102 (FEVKTDSTDHVKPKETEN) shows a compositional bias: basic and acidic residues. The segment at 85 to 112 (FEVKTDSTDHVKPKETENTKQPSKSCHK) is disordered. A helical membrane pass occupies residues 130–152 (LGLRMLFAKTVAVNFLLTAKLFF).

Gamma-delta TR is a heterodimer composed of a gamma and delta chain; disulfide-linked. The gamma-delta TR is associated with the transmembrane signaling CD3 coreceptor proteins following the stoichiometry: a single gamma-delta TR heterodimer associates with one CD3D-CD3E heterodimer, one CD3G-CD3E heterodimer and one CD247 homodimer forming a stable octameric structure. Upon activation, gamma-delta TR complex associates with FCER1G to initiate intracellular signaling.

It localises to the cell membrane. Constant region of T cell receptor (TR) delta chain that participates in the antigen recognition. Gamma-delta TRs recognize a variety of self and foreign non-peptide antigens frequently expressed at the epithelial boundaries between the host and external environment, including endogenous lipids presented by MH-like protein CD1D and phosphoantigens presented by butyrophilin-like molecule BTN3A1. Upon antigen recognition induces rapid, innate-like immune responses involved in pathogen clearance and tissue repair. Binding of gamma-delta TR complex to antigen triggers phosphorylation of immunoreceptor tyrosine-based activation motifs (ITAMs) in the CD3 chains by the LCK and FYN kinases, allowing the recruitment, phosphorylation, and activation of ZAP70 that facilitates phosphorylation of the scaffolding proteins LCP2 and LAT. This lead to the formation of a supramolecular signalosome that recruits the phospholipase PLCG1, resulting in calcium mobilization and ERK activation, ultimately leading to T cell expansion and differentiation into effector cells. Gamma-delta TRs are produced through somatic rearrangement of a limited repertoire of variable (V), diversity (D), and joining (J) genes. The potential diversity of gamma-delta TRs is conferred by the unique ability to rearrange (D) genes in tandem and to utilize all three reading frames. The combinatorial diversity is considerably increased by the sequence exonuclease trimming and random nucleotide (N) region additions which occur during the V-(D)-J rearrangements. This is T cell receptor delta constant from Homo sapiens (Human).